Consider the following 647-residue polypeptide: Pollen receptor-like kinase 2 (647 aa).

An N-terminal signal peptide occupies residues 1–21; it reads MESKCLMFVSIVSVFFMVVNG. 5 LRR repeats span residues 87–109, 110–134, 136–159, 161–183, and 185–203; these read LNSL…EFKK, LVAL…AFDG, GWLK…LVKS, KLIE…RHHP, and MLNL…SFST. Residues 248-268 form a helical membrane-spanning segment; sequence IVAAAVAALAASLIIIGVVIF. Residues 338–613 form the Protein kinase domain; sequence KASAEILGSG…EAVEKMEDLM (276 aa). Position 340 is a phosphoserine (Ser-340). ATP contacts are provided by residues 344-352 and Lys-366; that span reads LGSGCFGAS. Ser-418 is subject to Phosphoserine. Thr-438 is modified (phosphothreonine). Tyr-508 is modified (phosphotyrosine). Residues 620 to 647 are disordered; it reads DDDFYSTYASEADGRSSRGLSSEGINLS. Polar residues predominate over residues 637–647; sequence RGLSSEGINLS.

This sequence belongs to the protein kinase superfamily. Ser/Thr protein kinase family. In terms of assembly, part of a complex containing ROPGEF1 and ARAC11/ROP1. The interaction between PRK2, ROPGEF1 and ARAC11/ROP1 is phosphorylation-independent. Interacts with ROPGEF12 (via C-terminus). Interacts with ROPGEF1 (via PRONE domain). As to expression, expressed in pollen and/or in flowers, but not in leaves. Expressed in pollen tube.

The protein localises to the cell membrane. The enzyme catalyses L-seryl-[protein] + ATP = O-phospho-L-seryl-[protein] + ADP + H(+). The catalysed reaction is L-threonyl-[protein] + ATP = O-phospho-L-threonyl-[protein] + ADP + H(+). Its activity is regulated as follows. The phosphorylation activity is calcium-independent. Receptor-like kinase involved in the control of pollen germination and pollen tube polar growth. Phosphorylates ROPGEF1 in its C-terminal region, releasing its auto-inhibition, and thereby activating the ROP1 signaling pathway. May act as a scaffolding protein, recruiting ROPGEF12 to the plasma membrane by binding to its C-terminal domain. Phosphorylates ROPGEF12, releasing its auto-inhibition. The polypeptide is Pollen receptor-like kinase 2 (Arabidopsis thaliana (Mouse-ear cress)).